The chain runs to 104 residues: Secretoglobin family 3A member 1 (104 aa).

Residues Met1–Ala21 form the signal peptide.

It belongs to the secretoglobin family. UGRP subfamily. In terms of assembly, homodimer; disulfide-linked. As to expression, highly expressed in lung, where it localizes to epithelial cells lining the trachea and bronchi. Expression in lung is mainly restricted to bronchi, submucosal glands of the trachea, and tracheal epithelium, with little expression in terminal bronchioles. Expressed in uterus where it localizes to epithelial cells of the uterine glands. Also detected in heart, stomach and small intestine.

Its subcellular location is the secreted. Its function is as follows. Secreted cytokine-like protein. Inhibits cell growth in vitro. This chain is Secretoglobin family 3A member 1 (Scgb3a1), found in Mus musculus (Mouse).